Here is a 565-residue protein sequence, read N- to C-terminus: Adenine deaminase (565 aa).

It belongs to the metallo-dependent hydrolases superfamily. Adenine deaminase family. It depends on Mn(2+) as a cofactor.

It carries out the reaction adenine + H2O + H(+) = hypoxanthine + NH4(+). The polypeptide is Adenine deaminase (Methylobacterium nodulans (strain LMG 21967 / CNCM I-2342 / ORS 2060)).